The sequence spans 376 residues: 2-aminoethylphosphonate--pyruvate transaminase 2 (376 aa).

Lys-194 is subject to N6-(pyridoxal phosphate)lysine.

The protein belongs to the class-V pyridoxal-phosphate-dependent aminotransferase family. PhnW subfamily. In terms of assembly, homodimer. It depends on pyridoxal 5'-phosphate as a cofactor.

The enzyme catalyses (2-aminoethyl)phosphonate + pyruvate = phosphonoacetaldehyde + L-alanine. In terms of biological role, involved in phosphonate degradation. This chain is 2-aminoethylphosphonate--pyruvate transaminase 2, found in Burkholderia lata (strain ATCC 17760 / DSM 23089 / LMG 22485 / NCIMB 9086 / R18194 / 383).